Here is a 133-residue protein sequence, read N- to C-terminus: Ribosome-binding factor A (133 aa).

Belongs to the RbfA family. As to quaternary structure, monomer. Binds 30S ribosomal subunits, but not 50S ribosomal subunits or 70S ribosomes.

It localises to the cytoplasm. Functionally, one of several proteins that assist in the late maturation steps of the functional core of the 30S ribosomal subunit. Associates with free 30S ribosomal subunits (but not with 30S subunits that are part of 70S ribosomes or polysomes). Required for efficient processing of 16S rRNA. May interact with the 5'-terminal helix region of 16S rRNA. The chain is Ribosome-binding factor A from Citrobacter koseri (strain ATCC BAA-895 / CDC 4225-83 / SGSC4696).